The chain runs to 135 residues: Lactoylglutathione lyase (135 aa).

Residues 2-126 (RLLHTMLRVG…DGYKIELIEA (125 aa)) form the VOC domain. Ni(2+) is bound at residue His5. Arg9 is a binding site for substrate. Glu56 contacts Ni(2+). Residues Asn60 and His74 each contribute to the substrate site. Positions 74 and 122 each coordinate Ni(2+). Glu122 (proton donor/acceptor) is an active-site residue.

This sequence belongs to the glyoxalase I family. As to quaternary structure, homodimer. Requires Ni(2+) as cofactor.

It catalyses the reaction (R)-S-lactoylglutathione = methylglyoxal + glutathione. Its pathway is secondary metabolite metabolism; methylglyoxal degradation; (R)-lactate from methylglyoxal: step 1/2. Catalyzes the conversion of hemimercaptal, formed from methylglyoxal and glutathione, to S-lactoylglutathione. This chain is Lactoylglutathione lyase (gloA), found in Salmonella typhi.